A 457-amino-acid polypeptide reads, in one-letter code: Fibrinogen C domain-containing protein 1-A (457 aa).

Positions 1-20 (MGSDRWKNIGGTPQMEDSAQ) are disordered. The Cytoplasmic segment spans residues 1 to 33 (MGSDRWKNIGGTPQMEDSAQEKTQRKGCGYILC). The helical; Signal-anchor for type II membrane protein transmembrane segment at 34-54 (TVLLSVAVLLAVTVTGAVLFM) threads the bilayer. The Extracellular portion of the chain corresponds to 55–457 (NHYHAPSTEP…MKIRPQREEN (403 aa)). The interval 216–235 (ADLQRAPSRNSRPRGCANGS) is disordered. The Fibrinogen C-terminal domain maps to 231–454 (CANGSKPRDC…FTEMKIRPQR (224 aa)). An N-linked (GlcNAc...) asparagine glycan is attached at Asn-233. Cys-240 and Cys-269 are disulfide-bonded. A glycan (N-linked (GlcNAc...) asparagine) is linked at Asn-336. Ca(2+) contacts are provided by Asp-389 and Asp-391. The cysteines at positions 397 and 410 are disulfide-linked.

As to quaternary structure, homotetramer; disulfide-linked.

It localises to the membrane. Its function is as follows. Acetyl group-binding receptor which shows a calcium-dependent binding to acetylated structures such as chitin, some N-acetylated carbohydrates, and amino acids. The polypeptide is Fibrinogen C domain-containing protein 1-A (fibcd1-a) (Xenopus laevis (African clawed frog)).